Here is a 145-residue protein sequence, read N- to C-terminus: 3-dehydroquinate dehydratase (145 aa).

Tyrosine 22 serves as the catalytic Proton acceptor. Substrate contacts are provided by asparagine 71, histidine 77, and aspartate 84. The Proton donor role is filled by histidine 97. Substrate contacts are provided by residues 98–99 (IS) and arginine 108.

This sequence belongs to the type-II 3-dehydroquinase family. As to quaternary structure, homododecamer.

The enzyme catalyses 3-dehydroquinate = 3-dehydroshikimate + H2O. It participates in metabolic intermediate biosynthesis; chorismate biosynthesis; chorismate from D-erythrose 4-phosphate and phosphoenolpyruvate: step 3/7. Functionally, catalyzes a trans-dehydration via an enolate intermediate. The polypeptide is 3-dehydroquinate dehydratase (Exiguobacterium sp. (strain ATCC BAA-1283 / AT1b)).